We begin with the raw amino-acid sequence, 118 residues long: Telomere bouquet protein 2 (118 aa).

Interacts with bqt1. The bqt1-bqt2-sad1 complex binds rap1.

The protein resides in the cytoplasm. The protein localises to the nucleus. It localises to the cytoskeleton. It is found in the microtubule organizing center. Its subcellular location is the spindle pole body. The protein resides in the chromosome. The protein localises to the telomere. Involved in chromosome segregation. During meiotic prophase, connects telomeres to the spindle pole body by forming a bridge between the telomere protein rap1 and the spindle pole body protein sad1. The sequence is that of Telomere bouquet protein 2 (bqt2) from Schizosaccharomyces pombe (strain 972 / ATCC 24843) (Fission yeast).